A 154-amino-acid polypeptide reads, in one-letter code: Superoxide dismutase [Cu-Zn] (154 aa).

The Cu cation site is built by His47, His49, and His64. An intrachain disulfide couples Cys58 to Cys147. 4 residues coordinate Zn(2+): His64, His72, His81, and Asp84. Residue His121 coordinates Cu cation. Arg144 provides a ligand contact to substrate.

The protein belongs to the Cu-Zn superoxide dismutase family. In terms of assembly, homodimer. Requires Cu cation as cofactor. Zn(2+) serves as cofactor.

Its subcellular location is the cytoplasm. It carries out the reaction 2 superoxide + 2 H(+) = H2O2 + O2. Its function is as follows. Destroys radicals which are normally produced within the cells and which are toxic to biological systems. The polypeptide is Superoxide dismutase [Cu-Zn] (sod1) (Schizosaccharomyces pombe (strain 972 / ATCC 24843) (Fission yeast)).